Consider the following 156-residue polypeptide: Rhombotin-1 (156 aa).

LIM zinc-binding domains follow at residues 22–84 (KGCA…LFGT) and 86–148 (GNCA…GQLN).

The protein resides in the nucleus. Its function is as follows. May be involved in gene regulation within neural lineage cells potentially by direct DNA binding or by binding to other transcription factors. This is Rhombotin-1 from Xenopus laevis (African clawed frog).